A 269-amino-acid polypeptide reads, in one-letter code: Shikimate dehydrogenase (NADP(+)) (269 aa).

Residues serine 17–serine 19 and threonine 64 contribute to the shikimate site. The active-site Proton acceptor is lysine 68. Glutamate 80 is an NADP(+) binding site. Residues asparagine 89 and aspartate 105 each contribute to the shikimate site. Residues glycine 130 to alanine 134, asparagine 154 to lysine 159, and methionine 213 contribute to the NADP(+) site. Tyrosine 215 is a binding site for shikimate. NADP(+) is bound at residue glycine 237.

This sequence belongs to the shikimate dehydrogenase family. In terms of assembly, homodimer.

The catalysed reaction is shikimate + NADP(+) = 3-dehydroshikimate + NADPH + H(+). It functions in the pathway metabolic intermediate biosynthesis; chorismate biosynthesis; chorismate from D-erythrose 4-phosphate and phosphoenolpyruvate: step 4/7. Involved in the biosynthesis of the chorismate, which leads to the biosynthesis of aromatic amino acids. Catalyzes the reversible NADPH linked reduction of 3-dehydroshikimate (DHSA) to yield shikimate (SA). This Neisseria lactamica protein is Shikimate dehydrogenase (NADP(+)).